The chain runs to 184 residues: MMSQPAKVLLLYAHPESQDSVANRVLLKPATQLSNVTVHDLYAHYPDFFIDIPREQALLREHEVIVFQHPLYTYSCPALLKEWLDRVLSRGFASGPGGNQLAGKYWRSVITTGEPESAYRYDALNRYPMSDVLRPFELAAGMCRMHWLSPIIIYWARRQSAQELASHARAYGDWLANPLSPGGC.

It belongs to the NAD(P)H dehydrogenase (quinone) family. KefG subfamily. Interacts with KefB.

The protein resides in the cell inner membrane. The enzyme catalyses a quinone + NADH + H(+) = a quinol + NAD(+). It carries out the reaction a quinone + NADPH + H(+) = a quinol + NADP(+). Functionally, regulatory subunit of a potassium efflux system that confers protection against electrophiles. Required for full activity of KefB. The chain is Glutathione-regulated potassium-efflux system ancillary protein KefG from Escherichia coli O1:K1 / APEC.